Here is a 100-residue protein sequence, read N- to C-terminus: MDFSQLGGLSGLLDGMKKEFSQLEEKNKDTIHTSKSGGGMVSVSFNGLGELVDLQIDDSLLEDKEAMQIYLMSALNDGYKAVEENRKNLAFNMLGNFAKL.

The protein belongs to the YbaB/EbfC family. Homodimer.

The protein resides in the cytoplasm. It is found in the nucleoid. Functionally, binds to DNA and alters its conformation. May be involved in regulation of gene expression, nucleoid organization and DNA protection. This Helicobacter pylori (strain G27) protein is Nucleoid-associated protein HPG27_32.